The chain runs to 158 residues: Transcription elongation factor GreA (158 aa).

Residues 47–75 (ENSEYDAAKDEQAFVEQRITQVEKMIRNA) adopt a coiled-coil conformation.

It belongs to the GreA/GreB family.

Functionally, necessary for efficient RNA polymerase transcription elongation past template-encoded arresting sites. The arresting sites in DNA have the property of trapping a certain fraction of elongating RNA polymerases that pass through, resulting in locked ternary complexes. Cleavage of the nascent transcript by cleavage factors such as GreA or GreB allows the resumption of elongation from the new 3'terminus. GreA releases sequences of 2 to 3 nucleotides. The chain is Transcription elongation factor GreA from Oceanobacillus iheyensis (strain DSM 14371 / CIP 107618 / JCM 11309 / KCTC 3954 / HTE831).